A 300-amino-acid polypeptide reads, in one-letter code: 33 kDa chaperonin (300 aa).

Disulfide bonds link C247-C249 and C280-C283.

The protein belongs to the HSP33 family. Under oxidizing conditions two disulfide bonds are formed involving the reactive cysteines. Under reducing conditions zinc is bound to the reactive cysteines and the protein is inactive.

The protein localises to the cytoplasm. Its function is as follows. Redox regulated molecular chaperone. Protects both thermally unfolding and oxidatively damaged proteins from irreversible aggregation. Plays an important role in the bacterial defense system toward oxidative stress. This chain is 33 kDa chaperonin, found in Prochlorococcus marinus subsp. pastoris (strain CCMP1986 / NIES-2087 / MED4).